Consider the following 128-residue polypeptide: Large ribosomal subunit protein bL20 (128 aa).

Belongs to the bacterial ribosomal protein bL20 family.

Its function is as follows. Binds directly to 23S ribosomal RNA and is necessary for the in vitro assembly process of the 50S ribosomal subunit. It is not involved in the protein synthesizing functions of that subunit. In Anaplasma phagocytophilum (strain HZ), this protein is Large ribosomal subunit protein bL20.